The sequence spans 382 residues: Alanine racemase (382 aa).

The active-site Proton acceptor; specific for D-alanine is the Lys37. Lys37 bears the N6-(pyridoxal phosphate)lysine mark. Arg135 is a substrate binding site. The Proton acceptor; specific for L-alanine role is filled by Tyr267. Met315 is a substrate binding site.

The protein belongs to the alanine racemase family. Requires pyridoxal 5'-phosphate as cofactor.

The catalysed reaction is L-alanine = D-alanine. Its pathway is amino-acid biosynthesis; D-alanine biosynthesis; D-alanine from L-alanine: step 1/1. In terms of biological role, catalyzes the interconversion of L-alanine and D-alanine. May also act on other amino acids. The sequence is that of Alanine racemase (alr) from Geobacter sulfurreducens (strain ATCC 51573 / DSM 12127 / PCA).